We begin with the raw amino-acid sequence, 81 residues long: Photosystem I iron-sulfur center (81 aa).

2 4Fe-4S ferredoxin-type domains span residues 2–31 (AHAV…MIPW) and 39–68 (IASA…VRVY). C11, C14, C17, C21, C48, C51, C54, and C58 together coordinate [4Fe-4S] cluster.

As to quaternary structure, the eukaryotic PSI reaction center is composed of at least 11 subunits. It depends on [4Fe-4S] cluster as a cofactor.

The protein localises to the plastid. It localises to the chloroplast thylakoid membrane. The enzyme catalyses reduced [plastocyanin] + hnu + oxidized [2Fe-2S]-[ferredoxin] = oxidized [plastocyanin] + reduced [2Fe-2S]-[ferredoxin]. Functionally, apoprotein for the two 4Fe-4S centers FA and FB of photosystem I (PSI); essential for photochemical activity. FB is the terminal electron acceptor of PSI, donating electrons to ferredoxin. The C-terminus interacts with PsaA/B/D and helps assemble the protein into the PSI complex. Required for binding of PsaD and PsaE to PSI. PSI is a plastocyanin-ferredoxin oxidoreductase, converting photonic excitation into a charge separation, which transfers an electron from the donor P700 chlorophyll pair to the spectroscopically characterized acceptors A0, A1, FX, FA and FB in turn. This chain is Photosystem I iron-sulfur center, found in Marchantia polymorpha (Common liverwort).